Reading from the N-terminus, the 400-residue chain is Exodeoxyribonuclease 7 large subunit (400 aa).

The protein belongs to the XseA family. Heterooligomer composed of large and small subunits.

Its subcellular location is the cytoplasm. The catalysed reaction is Exonucleolytic cleavage in either 5'- to 3'- or 3'- to 5'-direction to yield nucleoside 5'-phosphates.. In terms of biological role, bidirectionally degrades single-stranded DNA into large acid-insoluble oligonucleotides, which are then degraded further into small acid-soluble oligonucleotides. The chain is Exodeoxyribonuclease 7 large subunit from Clostridium perfringens (strain ATCC 13124 / DSM 756 / JCM 1290 / NCIMB 6125 / NCTC 8237 / Type A).